A 448-amino-acid polypeptide reads, in one-letter code: ATP-dependent RNA helicase sub2 (448 aa).

Residues 19 to 29 (DAAATTAAPAA) are compositionally biased toward low complexity. Residues 19-43 (DAAATTAAPAANGAQDKKGDLTVSG) form a disordered region. Positions 58–86 (TGFRDFLLKGELLRAITDCGFEHPSEVQQ) match the Q motif motif. Residues 89–271 (IPTAILNVDV…KKFMRNPLEV (183 aa)) form the Helicase ATP-binding domain. 102-109 (AKSGLGKT) serves as a coordination point for ATP. Positions 211-214 (DECD) match the DECD box motif. Residues 283–444 (GLQQYYIKLS…EYPEGGVDSS (162 aa)) form the Helicase C-terminal domain.

It belongs to the DEAD box helicase family. DECD subfamily.

It is found in the nucleus. The catalysed reaction is ATP + H2O = ADP + phosphate + H(+). Functionally, ATP-binding RNA helicase involved in transcription elongation and required for the export of mRNA out of the nucleus. SUB2 also plays a role in pre-mRNA splicing and spliceosome assembly. May be involved in rDNA and telomeric silencing, and maintenance of genome integrity. This chain is ATP-dependent RNA helicase sub2 (sub2), found in Aspergillus fumigatus (strain ATCC MYA-4609 / CBS 101355 / FGSC A1100 / Af293) (Neosartorya fumigata).